A 248-amino-acid chain; its full sequence is 4-hydroxy-tetrahydrodipicolinate reductase (248 aa).

Residues 9–14 (GAKGRV), 77–79 (GTT), and 104–107 (APNF) each bind NAD(+). The active-site Proton donor/acceptor is histidine 134. Histidine 135 is a binding site for (S)-2,3,4,5-tetrahydrodipicolinate. Lysine 138 acts as the Proton donor in catalysis. 144–145 (GT) lines the (S)-2,3,4,5-tetrahydrodipicolinate pocket.

The protein belongs to the DapB family.

Its subcellular location is the cytoplasm. It catalyses the reaction (S)-2,3,4,5-tetrahydrodipicolinate + NAD(+) + H2O = (2S,4S)-4-hydroxy-2,3,4,5-tetrahydrodipicolinate + NADH + H(+). The catalysed reaction is (S)-2,3,4,5-tetrahydrodipicolinate + NADP(+) + H2O = (2S,4S)-4-hydroxy-2,3,4,5-tetrahydrodipicolinate + NADPH + H(+). It participates in amino-acid biosynthesis; L-lysine biosynthesis via DAP pathway; (S)-tetrahydrodipicolinate from L-aspartate: step 4/4. Its function is as follows. Catalyzes the conversion of 4-hydroxy-tetrahydrodipicolinate (HTPA) to tetrahydrodipicolinate. This is 4-hydroxy-tetrahydrodipicolinate reductase from Corynebacterium glutamicum (strain R).